The primary structure comprises 173 residues: Cytochrome c-type biogenesis protein CcmE (173 aa).

The Cytoplasmic segment spans residues 1-8; that stretch reads MMSRKKRR. A helical; Signal-anchor for type II membrane protein transmembrane segment spans residues 9-29; sequence LWIVIACGIGLSTAVALMLFA. Over 30–173 the chain is Periplasmic; that stretch reads FRSSLSFFMS…PAQIEASNNG (144 aa). Residues H127 and Y131 each contribute to the heme site. The tract at residues 145-173 is disordered; sequence KWNPKFGPPPNAGAWDDKSPAQIEASNNG.

This sequence belongs to the CcmE/CycJ family.

The protein resides in the cell inner membrane. In terms of biological role, heme chaperone required for the biogenesis of c-type cytochromes. Transiently binds heme delivered by CcmC and transfers the heme to apo-cytochromes in a process facilitated by CcmF and CcmH. This Acidiphilium cryptum (strain JF-5) protein is Cytochrome c-type biogenesis protein CcmE.